The primary structure comprises 296 residues: Protein ea31 (296 aa).

The polypeptide is Protein ea31 (ea31) (Escherichia phage lambda (Bacteriophage lambda)).